Here is a 436-residue protein sequence, read N- to C-terminus: Zinc finger protein 101 (436 aa).

One can recognise a KRAB domain in the interval 4 to 82 (VAFEDVAVNF…RKEGNEHRET (79 aa)). The C2H2-type 1 zinc-finger motif lies at 102 to 124 (CKCSVCGKVFLRHSFLDRHMRAH). The segment covering 128 to 141 (KRSECGGEWRETPR) has biased composition (basic and acidic residues). Residues 128–164 (KRSECGGEWRETPRKQKQHGKASISPSSGARRTVTPT) form a disordered region. Residues 151 to 163 (ISPSSGARRTVTP) are compositionally biased toward polar residues. The C2H2-type 2 zinc finger occupies 169-191 (YECKVCGKAFNSPNLFQIHQRTH). The C2H2-type 3; degenerate zinc-finger motif lies at 197-219 (YKCREIVRAFTVSSFFRKHGKMH). C2H2-type zinc fingers lie at residues 225 to 247 (YECK…VRTH), 253 to 276 (YKCK…IRSH), 282 to 304 (HQCQ…ERTH), 310 to 332 (YECQ…ERAH), 338 to 360 (YECN…KKTH), 366 to 388 (YECT…EMTH), and 394 to 416 (FDCK…ERTH).

The protein belongs to the krueppel C2H2-type zinc-finger protein family. As to expression, expressed in a variety of adult and fetal tissues.

It is found in the nucleus. Its function is as follows. May be involved in transcriptional regulation. In Homo sapiens (Human), this protein is Zinc finger protein 101 (ZNF101).